The following is a 207-amino-acid chain: Cytochrome c biogenesis ATP-binding export protein CcmA (207 aa).

Residues 4 to 207 form the ABC transporter domain; that stretch reads LEARELLCER…RISLTQTRAA (204 aa). Residue 36–43 participates in ATP binding; sequence GSNGAGKT.

The protein belongs to the ABC transporter superfamily. CcmA exporter (TC 3.A.1.107) family. The complex is composed of two ATP-binding proteins (CcmA) and two transmembrane proteins (CcmB).

Its subcellular location is the cell inner membrane. The catalysed reaction is heme b(in) + ATP + H2O = heme b(out) + ADP + phosphate + H(+). In terms of biological role, part of the ABC transporter complex CcmAB involved in the biogenesis of c-type cytochromes; once thought to export heme, this seems not to be the case, but its exact role is uncertain. Responsible for energy coupling to the transport system. In Shigella boydii serotype 4 (strain Sb227), this protein is Cytochrome c biogenesis ATP-binding export protein CcmA.